The chain runs to 505 residues: L-carnitine/gamma-butyrobetaine antiporter (505 aa).

12 helical membrane passes run 10–30 (IEPK…WLTV), 51–71 (WGWA…WLVF), 92–112 (IFMM…SIEI), 143–163 (GPLP…FFFV), 195–215 (FYLV…TPLV), 231–251 (LDAI…ACGL), 263–283 (SYLS…SFIM), 316–336 (WTVF…IFLA), 347–367 (LCFG…TVLG), 403–423 (LSTA…VTLI), 446–466 (LLVR…LLAL), and 475–495 (AIIA…LSFI).

It belongs to the BCCT transporter (TC 2.A.15) family. CaiT subfamily. As to quaternary structure, homotrimer.

The protein resides in the cell inner membrane. It catalyses the reaction 4-(trimethylamino)butanoate(in) + (R)-carnitine(out) = 4-(trimethylamino)butanoate(out) + (R)-carnitine(in). It functions in the pathway amine and polyamine metabolism; carnitine metabolism. Functionally, catalyzes the exchange of L-carnitine for gamma-butyrobetaine. This chain is L-carnitine/gamma-butyrobetaine antiporter, found in Salmonella typhi.